Reading from the N-terminus, the 151-residue chain is Globin-2 B chain (151 aa).

S1 is subject to N-acetylserine. In terms of domain architecture, Globin spans V11–L151. Residue H103 participates in heme b binding.

The protein belongs to the globin family. As to quaternary structure, heterotetramer of two alpha chains and two beta chains.

The protein is Globin-2 B chain of Anadara inaequivalvis (Inequivalve ark).